A 90-amino-acid polypeptide reads, in one-letter code: MKANIHPQFKTVEVSCATCGKQHPIGTTVNSIKIETCSNCHTFYTGVQTFVVKAGPVDKFNKRYGITQDQKVKKFPSNADNQKEPAEEQE.

Residues Lys71–Glu90 are disordered. A compositionally biased stretch (basic and acidic residues) spans Asn81 to Glu90.

The protein belongs to the bacterial ribosomal protein bL31 family. Type A subfamily. In terms of assembly, part of the 50S ribosomal subunit.

Binds the 23S rRNA. The sequence is that of Large ribosomal subunit protein bL31 (rpmE) from Aster yellows witches'-broom phytoplasma (strain AYWB).